The chain runs to 455 residues: Growth/differentiation factor 6 (455 aa).

Residues 1-22 form the signal peptide; the sequence is MDTPRVLLSAVFLISFLWDLPG. Residues 23–335 constitute a propeptide that is removed on maturation; it reads FQQASISSSS…LPSPGRRRRR (313 aa). The interval 29–93 is disordered; that stretch reads SSSSSSAELG…EPPGRGPRVV (65 aa). The segment covering 45–76 has biased composition (basic and acidic residues); that stretch reads SRKEGKMQRAPRDSDAGREGQEPQPRPQDEPR. Positions 77–91 are enriched in low complexity; sequence AQQPRAQEPPGRGPR. N114 carries an N-linked (GlcNAc...) asparagine glycan. Disordered regions lie at residues 244 to 267 and 300 to 351; these read EAEA…GFGR and AEAA…KKSR. Over residues 330–351 the composition is skewed to basic residues; the sequence is GRRRRRTAFASRHGKRHGKKSR. Intrachain disulfides connect C354–C420, C383–C452, and C387–C454.

This sequence belongs to the TGF-beta family. In terms of assembly, homodimer; disulfide-linked.

It is found in the secreted. In terms of biological role, growth factor that controls proliferation and cellular differentiation in the retina and bone formation. Plays a key role in regulating apoptosis during retinal development. Establishes dorsal-ventral positional information in the retina and controls the formation of the retinotectal map. Required for normal formation of bones and joints in the limbs, skull, digits and axial skeleton. Plays a key role in establishing boundaries between skeletal elements during development. Regulation of GDF6 expression seems to be a mechanism for evolving species-specific changes in skeletal structures. Seems to positively regulate differentiation of chondrogenic tissue through the growth factor receptors subunits BMPR1A, BMPR1B, BMPR2 and ACVR2A, leading to the activation of SMAD1-SMAD5-SMAD8 complex. The regulation of chondrogenic differentiation is inhibited by NOG. Also involved in the induction of adipogenesis from mesenchymal stem cells. This mechanism acts through the growth factor receptors subunits BMPR1A, BMPR2 and ACVR2A and the activation of SMAD1-SMAD5-SMAD8 complex and MAPK14/p38. The sequence is that of Growth/differentiation factor 6 (GDF6) from Homo sapiens (Human).